A 66-amino-acid polypeptide reads, in one-letter code: UPF0337 protein BA_0987/GBAA_0987/BAS0923 (66 aa).

The segment at 1–22 (MSESGLKEQITGKVEKTKGQVK) is disordered. Residues 13 to 22 (KVEKTKGQVK) are compositionally biased toward basic and acidic residues.

Belongs to the UPF0337 (CsbD) family.

In Bacillus anthracis, this protein is UPF0337 protein BA_0987/GBAA_0987/BAS0923.